Reading from the N-terminus, the 137-residue chain is MLQPSRRKYRKEQKGRNTGLATRGTKVSFGDFGLKAIARGRLTARQIESARRAMTRHIKRGGRIWIRIFPDKPISKKPAEVRMGNGKGNPEYWVAEIQPGKVLYEMDGVDEALAREAFRLAAAKLPLETVFVTRQVG.

Basic residues predominate over residues 1-13 (MLQPSRRKYRKEQ). A disordered region spans residues 1-22 (MLQPSRRKYRKEQKGRNTGLAT).

Belongs to the universal ribosomal protein uL16 family. Part of the 50S ribosomal subunit.

In terms of biological role, binds 23S rRNA and is also seen to make contacts with the A and possibly P site tRNAs. This is Large ribosomal subunit protein uL16 from Azoarcus sp. (strain BH72).